The sequence spans 485 residues: Phosphoglucosamine mutase (485 aa).

The active-site Phosphoserine intermediate is the serine 133. Residues serine 133, aspartate 274, aspartate 276, and aspartate 278 each contribute to the Mg(2+) site. Position 133 is a phosphoserine (serine 133).

It belongs to the phosphohexose mutase family. Requires Mg(2+) as cofactor. In terms of processing, activated by phosphorylation.

It catalyses the reaction alpha-D-glucosamine 1-phosphate = D-glucosamine 6-phosphate. Functionally, catalyzes the conversion of glucosamine-6-phosphate to glucosamine-1-phosphate. The polypeptide is Phosphoglucosamine mutase (Rippkaea orientalis (strain PCC 8801 / RF-1) (Cyanothece sp. (strain PCC 8801))).